The chain runs to 325 residues: Aquaporin-8 (325 aa).

Residues 1–10 (MALRSPARDY) are Cytoplasmic-facing. Residues 11-31 (LVSMIGELVGTFLFLFFAFAA) traverse the membrane as a helical segment. Residues 32 to 52 (AQTANQPNGTKPLTPNATDTS) lie on the Extracellular side of the membrane. Asn-39 and Asn-47 each carry an N-linked (GlcNAc...) asparagine glycan. Residues 53–73 (KLLYIALAFGASLAANVWVFF) form a helical membrane-spanning segment. The Cytoplasmic segment spans residues 74–100 (RVSGGQFNPAVTLALVLIRAVSPTKAL). The short motif at 81–83 (NPA) is the NPA 1 element. Residues 101–121 (ILIPAQLVGGSLAAAAVKGII) traverse the membrane as a helical segment. The Extracellular segment spans residues 122–140 (PGDDILFAVSLGPGVANVQ). Residues 141 to 161 (GLFIELLLTFMLVFTILMLVA) traverse the membrane as a helical segment. Topologically, residues 162–167 (EKTKST) are cytoplasmic. A helical transmembrane segment spans residues 168-188 (FVAPIGIGFSLFIGHLVGIFW). Topologically, residues 189–212 (TGAGINPARAFSPALIQASFPSYH) are extracellular. The short motif at 194 to 196 (NPA) is the NPA 2 element. Residues 213–233 (WIYWLGPALGSFLAAGLYLGL) traverse the membrane as a helical segment. The Cytoplasmic segment spans residues 234–325 (KEMKYELVGG…GSPDSTDLPT (92 aa)). Disordered stretches follow at residues 279-298 (LGQFEGTTEGHRSPVDLERG) and 305-325 (EDDPHIRKSRYGSPDSTDLPT). Basic and acidic residues predominate over residues 286 to 298 (TEGHRSPVDLERG).

It belongs to the MIP/aquaporin (TC 1.A.8) family.

The protein localises to the cell membrane. The catalysed reaction is H2O2(out) = H2O2(in). It catalyses the reaction H2O(in) = H2O(out). Plasma membrane water channel that regulates the reactive oxygen species (ROS)-signaling pathway through its capacity to act as a membrane channel for hydrogen peroxide uptake. Required for the formation of infection structures and infection, especially on host leaves where it is essential for the penetration into the host. Regulates the expression of proteins related to redox-regulation and intracellular signal transduction and plays a role in the distribution of mitochondria in the hyphae. The protein is Aquaporin-8 of Botryotinia fuckeliana (strain B05.10) (Noble rot fungus).